The following is a 407-amino-acid chain: Large ribosomal subunit protein uL3-like (407 aa).

Positions 1 to 31 (MSHRKFSAPRHGHLGFLPHKRSHRHRGKVKT) are enriched in basic residues. 2 disordered regions span residues 1–35 (MSHR…WPRD) and 383–407 (QEKR…SGDL). Over residues 394–407 (KHLEKEKPETSGDL) the composition is skewed to basic and acidic residues.

It belongs to the universal ribosomal protein uL3 family. Component of the large ribosomal subunit in striated muscle cells.

Functionally, heart- and skeletal muscle-specific component of the ribosome, which regulates muscle function. Component of the large ribosomal subunit in striated muscle cells: replaces the RPL3 paralog in the ribosome in these cells. The ribosome is a large ribonucleoprotein complex responsible for the synthesis of proteins in the cell. Inhibits myotube growth and muscle function. In Bos taurus (Bovine), this protein is Large ribosomal subunit protein uL3-like (RPL3L).